The chain runs to 82 residues: RNA-binding protein Hfq (82 aa).

The Sm domain maps to 9–68 (DPYLNTLRKERVPVSIYLVNGIKLQGQIESFDQFVILLKNTVSQMVYKTAISTVVPSRPV).

It belongs to the Hfq family. Homohexamer.

Functionally, RNA chaperone that binds small regulatory RNA (sRNAs) and mRNAs to facilitate mRNA translational regulation in response to envelope stress, environmental stress and changes in metabolite concentrations. Also binds with high specificity to tRNAs. This is RNA-binding protein Hfq from Pseudomonas aeruginosa.